Here is a 611-residue protein sequence, read N- to C-terminus: uncharacterized protein (611 aa).

The SAC domain occupies 51–351; it reads LYGFIRLKIY…DYHKQGSRNL (301 aa).

It to yeast RSD1 and S.pombe SpBC19F5.03.

This is an uncharacterized protein from Schizosaccharomyces pombe (strain 972 / ATCC 24843) (Fission yeast).